We begin with the raw amino-acid sequence, 64 residues long: MPKMKTNKGAAKRFKKTASGYKFKQAGLRHILTKRRTKVKRHLRAKCMIAASDIKSVKKLLRHG.

Belongs to the bacterial ribosomal protein bL35 family.

In Colwellia psychrerythraea (strain 34H / ATCC BAA-681) (Vibrio psychroerythus), this protein is Large ribosomal subunit protein bL35.